Here is a 130-residue protein sequence, read N- to C-terminus: Methylglyoxal synthase (130 aa).

One can recognise an MGS-like domain in the interval 1–130; sequence MSTPRIALIA…DLARRLPVKA (130 aa). Residues His11, Lys15, 37-40, and 57-58 each bind substrate; these read TGTT and SG. The Proton donor/acceptor role is filled by Asp63. A substrate-binding site is contributed by His90.

This sequence belongs to the methylglyoxal synthase family.

The catalysed reaction is dihydroxyacetone phosphate = methylglyoxal + phosphate. Catalyzes the formation of methylglyoxal from dihydroxyacetone phosphate. This is Methylglyoxal synthase from Burkholderia thailandensis (strain ATCC 700388 / DSM 13276 / CCUG 48851 / CIP 106301 / E264).